Reading from the N-terminus, the 285-residue chain is MGDSELDYTIEFPEPSLQGWPWDPEREPVVILLGWGGCKDHYLAKYSAIYHNQGCTVIKYTAAWKAVFITESLGLNSLREDAKKLLELLFDYEIEKSPIVFHVFSNGGFMLYRYIVELLHSHCPLNKLHVVGTIFDSAPGNRNVIGSVRALDTILRTSTNKAFRFLALAAFAILVIILRILLYPLTRFLHENHYDAMKKDPSRWPQLYLYSRADPIISYLDVESMIAARRRRCLPTETLDFGKSEHVSHFRRFPQRYSEICTSFLRDCVRKASISMLRSEHPVSF.

A helical membrane pass occupies residues 165–185 (FLALAAFAILVIILRILLYPL).

Belongs to the TMEM53 family.

It localises to the nucleus outer membrane. Functionally, ensures normal bone formation, through the negative regulation of bone morphogenetic protein (BMP) signaling in osteoblast lineage cells by blocking cytoplasm-nucleus translocation of phosphorylated SMAD proteins. The polypeptide is Transmembrane protein 53-A (tmem53-a) (Xenopus laevis (African clawed frog)).